We begin with the raw amino-acid sequence, 345 residues long: UDP-3-O-acylglucosamine N-acyltransferase (345 aa).

The active-site Proton acceptor is the histidine 241.

This sequence belongs to the transferase hexapeptide repeat family. LpxD subfamily. In terms of assembly, homotrimer.

The enzyme catalyses a UDP-3-O-[(3R)-3-hydroxyacyl]-alpha-D-glucosamine + a (3R)-hydroxyacyl-[ACP] = a UDP-2-N,3-O-bis[(3R)-3-hydroxyacyl]-alpha-D-glucosamine + holo-[ACP] + H(+). It functions in the pathway bacterial outer membrane biogenesis; LPS lipid A biosynthesis. Its function is as follows. Catalyzes the N-acylation of UDP-3-O-acylglucosamine using 3-hydroxyacyl-ACP as the acyl donor. Is involved in the biosynthesis of lipid A, a phosphorylated glycolipid that anchors the lipopolysaccharide to the outer membrane of the cell. This Desulfotalea psychrophila (strain LSv54 / DSM 12343) protein is UDP-3-O-acylglucosamine N-acyltransferase.